Reading from the N-terminus, the 146-residue chain is Large ribosomal subunit protein uL11 (146 aa).

It belongs to the universal ribosomal protein uL11 family. In terms of assembly, part of the ribosomal stalk of the 50S ribosomal subunit. Interacts with L10 and the large rRNA to form the base of the stalk. L10 forms an elongated spine to which L12 dimers bind in a sequential fashion forming a multimeric L10(L12)X complex. Post-translationally, one or more lysine residues are methylated.

Its function is as follows. Forms part of the ribosomal stalk which helps the ribosome interact with GTP-bound translation factors. The protein is Large ribosomal subunit protein uL11 of Corynebacterium kroppenstedtii (strain DSM 44385 / JCM 11950 / CIP 105744 / CCUG 35717).